The following is a 544-amino-acid chain: CTP synthase (544 aa).

Residues 1–265 (MTKFIFVTGG…DNIITEQLQL (265 aa)) form an amidoligase domain region. Ser13 serves as a coordination point for CTP. Ser13 provides a ligand contact to UTP. ATP-binding positions include 14–19 (SLGKGI) and Asp71. Residues Asp71 and Glu139 each coordinate Mg(2+). CTP is bound by residues 146-148 (DIE), 186-191 (KTKPTQ), and Lys222. UTP is bound by residues 186–191 (KTKPTQ) and Lys222. Residues 290-544 (KIAMVGKYVD…VKAALNNKKA (255 aa)) enclose the Glutamine amidotransferase type-1 domain. Gly353 contributes to the L-glutamine binding site. The active-site Nucleophile; for glutamine hydrolysis is Cys380. L-glutamine is bound by residues 381-384 (LGMQ), Glu404, and Arg471. Residues His517 and Glu519 contribute to the active site.

The protein belongs to the CTP synthase family. As to quaternary structure, homotetramer.

It catalyses the reaction UTP + L-glutamine + ATP + H2O = CTP + L-glutamate + ADP + phosphate + 2 H(+). The enzyme catalyses L-glutamine + H2O = L-glutamate + NH4(+). The catalysed reaction is UTP + NH4(+) + ATP = CTP + ADP + phosphate + 2 H(+). The protein operates within pyrimidine metabolism; CTP biosynthesis via de novo pathway; CTP from UDP: step 2/2. With respect to regulation, allosterically activated by GTP, when glutamine is the substrate; GTP has no effect on the reaction when ammonia is the substrate. The allosteric effector GTP functions by stabilizing the protein conformation that binds the tetrahedral intermediate(s) formed during glutamine hydrolysis. Inhibited by the product CTP, via allosteric rather than competitive inhibition. Catalyzes the ATP-dependent amination of UTP to CTP with either L-glutamine or ammonia as the source of nitrogen. Regulates intracellular CTP levels through interactions with the four ribonucleotide triphosphates. The sequence is that of CTP synthase from Neisseria meningitidis serogroup C (strain 053442).